A 501-amino-acid polypeptide reads, in one-letter code: Glycerol kinase (501 aa).

Threonine 17 lines the ADP pocket. Residues threonine 17, threonine 18, and serine 19 each contribute to the ATP site. Threonine 17 contacts sn-glycerol 3-phosphate. Arginine 21 is an ADP binding site. Sn-glycerol 3-phosphate-binding residues include arginine 87, glutamate 88, tyrosine 139, and aspartate 243. 5 residues coordinate glycerol: arginine 87, glutamate 88, tyrosine 139, aspartate 243, and glutamine 244. Positions 265 and 308 each coordinate ADP. Residues threonine 265, glycine 308, glutamine 312, and glycine 409 each coordinate ATP. ADP contacts are provided by glycine 409 and asparagine 413.

Belongs to the FGGY kinase family.

It catalyses the reaction glycerol + ATP = sn-glycerol 3-phosphate + ADP + H(+). The protein operates within polyol metabolism; glycerol degradation via glycerol kinase pathway; sn-glycerol 3-phosphate from glycerol: step 1/1. Its activity is regulated as follows. Inhibited by fructose 1,6-bisphosphate (FBP). Functionally, key enzyme in the regulation of glycerol uptake and metabolism. Catalyzes the phosphorylation of glycerol to yield sn-glycerol 3-phosphate. This Pseudomonas fluorescens (strain SBW25) protein is Glycerol kinase.